The primary structure comprises 646 residues: Long-chain fatty acid transport protein 1 (646 aa).

Residues 1–13 (MRAPGAGTASVAS) are Extracellular-facing. A helical membrane pass occupies residues 14-34 (LALLWFLGLPWTWSAAAAFCV). Over 35–646 (YVGGGGWRFL…ARICAGDFSL (612 aa)) the chain is Cytoplasmic. A sufficient for oligomerization region spans residues 191 to 475 (EVSEQLGKSL…YVSDSATNKK (285 aa)). 246–257 (YIYTSGTTGLPK) contacts AMP.

Belongs to the ATP-dependent AMP-binding enzyme family. As to quaternary structure, self-associates. May function as a homodimer. Interacts with EPRS1; mediates the translocation of SLC27A1 from the cytoplasm to the plasma membrane thereby increasing the uptake of long-chain fatty acids. Interacts with DGAT2 and this interaction is enhanced in the presence of ZFYVE1. Higher expression in white adipose tissue than in heart. Highest expression in skeletal muscle, heart and fat. Lower levels in brain, kidney, lung, liver and testis. No expression in spleen or intestine.

The protein localises to the cell membrane. It localises to the mitochondrion outer membrane. The protein resides in the endomembrane system. It is found in the cytoplasm. The enzyme catalyses a fatty acid(in) = a fatty acid(out). It carries out the reaction (9Z)-octadecenoate(out) = (9Z)-octadecenoate(in). It catalyses the reaction hexadecanoate(out) = hexadecanoate(in). The catalysed reaction is (5Z,8Z,11Z,14Z)-eicosatetraenoate(out) = (5Z,8Z,11Z,14Z)-eicosatetraenoate(in). The enzyme catalyses (9Z,12Z)-octadecadienoate(out) = (9Z,12Z)-octadecadienoate(in). It carries out the reaction a long-chain fatty acid + ATP + CoA = a long-chain fatty acyl-CoA + AMP + diphosphate. It catalyses the reaction (5Z,8Z,11Z,14Z)-eicosatetraenoate + ATP + CoA = (5Z,8Z,11Z,14Z)-eicosatetraenoyl-CoA + AMP + diphosphate. The catalysed reaction is a very long-chain fatty acid + ATP + CoA = a very long-chain fatty acyl-CoA + AMP + diphosphate. The enzyme catalyses tetracosanoate + ATP + CoA = tetracosanoyl-CoA + AMP + diphosphate. With respect to regulation, inhibited by Triacsin C. Both insulin and muscle contraction stimulate translocation to the plasma membrane in muscle, increasing fatty acid transport activity. Mediates the import of long-chain fatty acids (LCFA) into the cell by facilitating their transport at the plasma membrane. Also functions as an acyl-CoA ligase catalyzing the ATP-dependent formation of fatty acyl-CoA using LCFA and very-long-chain fatty acids (VLCFA) as substrates, which prevents fatty acid efflux from cells and might drive more fatty acid uptake. May act directly as a bona fide transporter, or alternatively, in a cytoplasmic or membrane-associated multimeric protein complex to trap and draw fatty acids towards accumulation. Plays a pivotal role in regulating available LCFA substrates from exogenous sources in tissues undergoing high levels of beta-oxidation or triglyceride synthesis. May be involved in regulation of cholesterol metabolism. Probably involved in fatty acid transport across the blood barrier. The polypeptide is Long-chain fatty acid transport protein 1 (Mus musculus (Mouse)).